Consider the following 357-residue polypeptide: Protein-arginine kinase (357 aa).

The Phosphagen kinase C-terminal domain occupies 24–256 (VIISSRVRLA…LQLVTQERAA (233 aa)). ATP-binding positions include 27-31 (SSRVR), H93, R127, 178-182 (RASVM), and 209-214 (RGLYGE). An RDXXRA motif of the pArg binding pocket involved in allosteric regulation motif is present at residues 339-344 (RDIFRA).

This sequence belongs to the ATP:guanido phosphotransferase family.

The enzyme catalyses L-arginyl-[protein] + ATP = N(omega)-phospho-L-arginyl-[protein] + ADP + H(+). Appears to be allosterically activated by the binding of pArg-containing polypeptides to the pArg-binding pocket localized in the C-terminal domain of McsB. Its function is as follows. Catalyzes the specific phosphorylation of arginine residues in proteins. In Desulforamulus reducens (strain ATCC BAA-1160 / DSM 100696 / MI-1) (Desulfotomaculum reducens), this protein is Protein-arginine kinase.